Here is a 241-residue protein sequence, read N- to C-terminus: Zinc finger CCHC domain-containing protein 24 (241 aa).

Ser-65 and Ser-93 each carry phosphoserine. The CCHC-type zinc finger occupies 132–149 (YLCHLCFNKGHYIKDCPQ).

The chain is Zinc finger CCHC domain-containing protein 24 (ZCCHC24) from Macaca fascicularis (Crab-eating macaque).